The sequence spans 1863 residues: C-myc promoter-binding protein (1863 aa).

An MABP domain is found at 42–200 (KEPITDVSVI…AVYLCYKKSV (159 aa)). Residues 192 to 364 (VYLCYKKSVA…KVPFPSPQRP (173 aa)) form the uDENN domain. One can recognise a cDENN domain in the interval 385 to 521 (PLPLSGGKFS…PCKNLMNTLN (137 aa)). The 119-residue stretch at 523–641 (LHQQLAKLQQ…CSFVSDKDAS (119 aa)) folds into the dDENN domain. Ser731 carries the post-translational modification Phosphoserine. 2 PPR repeats span residues 772–808 (WFICLPAYVKVCHSKVRALKTAYDVLKKMQSKKMDPP) and 809–843 (DEVCYRILMQLCGQYDQPVLAVRVLFEMQKAGIDP). The segment at 905–952 (DLGYNSLSKDEVRRGDTSTEDIQEEKDKKGSDCSSLSESESTKGSADC) is disordered. Positions 912–921 (SKDEVRRGDT) are enriched in basic and acidic residues. Residues 917–933 (RRGDTSTEDIQEEKDKK) carry the Bipartite nuclear localization signal motif. Positions 936–949 (DCSSLSESESTKGS) are enriched in low complexity. Ser1015, Ser1035, Ser1099, Ser1151, and Ser1152 each carry phosphoserine. Positions 1075–1111 (TRPNTLDIGKPPLRSKRDSLEKESSDDDTPFDGSNYL) are disordered. Residues 1177–1202 (TEQQQKEEEEEDEDDSKSISTPSARR) form a disordered region. Ser1225, Ser1240, and Ser1251 each carry phosphoserine. Disordered stretches follow at residues 1237 to 1306 (NKKS…SPSF) and 1348 to 1375 (SKDQSSDRTSLSSVGAQDSESTSLTDED). The segment covering 1269 to 1279 (TKSEEKPRDRL) has biased composition (basic and acidic residues). The residue at position 1281 (Ser1281) is a Phosphoserine. Polar residues-rich tracts occupy residues 1297 to 1306 (DTLTHSSPSF) and 1348 to 1371 (SKDQSSDRTSLSSVGAQDSESTSL). 4 positions are modified to phosphoserine: Ser1508, Ser1587, Ser1589, and Ser1591.

Expressed ubiquitously. Highest expression in bone marrow, medium in peripheral blood lymphocytes and lowest in spleen. In brain, breast, and prostate, higher expression was seen in normal cells than in tumor cells. Expression is regulated in a growth- and cell cycle-dependent manner.

The protein localises to the nucleus. Its function is as follows. Probable guanine nucleotide exchange factor (GEF) which may activate RAB10. Promotes the exchange of GDP to GTP, converting inactive GDP-bound Rab proteins into their active GTP-bound form. According to PubMed:8056341, it may bind to ISRE-like element (interferon-stimulated response element) of MYC P2 promoter. The sequence is that of C-myc promoter-binding protein (DENND4A) from Homo sapiens (Human).